The primary structure comprises 1211 residues: DNA polymerase beta (1211 aa).

Repeat copies occupy residues 1074-1077, 1078-1081, 1082-1085, and 1086-1089. Residues 1074-1089 are 4 X 4 AA tandem repeats of [NK]-[P]-A-G; sequence KPAGKPAGNPAGNPAG.

Belongs to the DNA polymerase type-B family.

It carries out the reaction DNA(n) + a 2'-deoxyribonucleoside 5'-triphosphate = DNA(n+1) + diphosphate. Its function is as follows. DNA-directed DNA polymerase involved in viral DNA replication. The polypeptide is DNA polymerase beta (DPOL) (African swine fever virus (strain Badajoz 1971 Vero-adapted) (Ba71V)).